The sequence spans 299 residues: Protein-methionine-sulfoxide reductase catalytic subunit MsrP (299 aa).

The tat-type signal signal peptide spans 1-44 (MAHRWINDLTPADITPRGAWMNRRQVMAGMAGAGLAAFAGSAQA). Mo-molybdopterin-binding positions include Asn59, 62-63 (YE), Cys117, Thr152, Asn200, Arg205, and 216-218 (SIK).

The protein belongs to the MsrP family. Heterodimer of a catalytic subunit (MsrP) and a heme-binding subunit (MsrQ). It depends on Mo-molybdopterin as a cofactor. Predicted to be exported by the Tat system. The position of the signal peptide cleavage has not been experimentally proven.

It is found in the periplasm. The enzyme catalyses L-methionyl-[protein] + a quinone + H2O = L-methionyl-(S)-S-oxide-[protein] + a quinol. The catalysed reaction is L-methionyl-[protein] + a quinone + H2O = L-methionyl-(R)-S-oxide-[protein] + a quinol. In terms of biological role, part of the MsrPQ system that repairs oxidized periplasmic proteins containing methionine sulfoxide residues (Met-O), using respiratory chain electrons. Thus protects these proteins from oxidative-stress damage caused by reactive species of oxygen and chlorine generated by the host defense mechanisms. MsrPQ is essential for the maintenance of envelope integrity under bleach stress, rescuing a wide series of structurally unrelated periplasmic proteins from methionine oxidation. The catalytic subunit MsrP is non-stereospecific, being able to reduce both (R-) and (S-) diastereoisomers of methionine sulfoxide. The chain is Protein-methionine-sulfoxide reductase catalytic subunit MsrP from Ruegeria pomeroyi (strain ATCC 700808 / DSM 15171 / DSS-3) (Silicibacter pomeroyi).